The following is a 143-amino-acid chain: Transcription antitermination protein NusB (143 aa).

It belongs to the NusB family.

Involved in transcription antitermination. Required for transcription of ribosomal RNA (rRNA) genes. Binds specifically to the boxA antiterminator sequence of the ribosomal RNA (rrn) operons. The chain is Transcription antitermination protein NusB from Dehalococcoides mccartyi (strain ATCC BAA-2266 / KCTC 15142 / 195) (Dehalococcoides ethenogenes (strain 195)).